A 105-amino-acid polypeptide reads, in one-letter code: Large ribosomal subunit protein uL23 (105 aa).

This sequence belongs to the universal ribosomal protein uL23 family. Part of the 50S ribosomal subunit. Contacts protein L29, and trigger factor when it is bound to the ribosome.

Its function is as follows. One of the early assembly proteins it binds 23S rRNA. One of the proteins that surrounds the polypeptide exit tunnel on the outside of the ribosome. Forms the main docking site for trigger factor binding to the ribosome. The protein is Large ribosomal subunit protein uL23 of Ureaplasma parvum serovar 3 (strain ATCC 27815 / 27 / NCTC 11736).